A 143-amino-acid polypeptide reads, in one-letter code: Large ribosomal subunit protein uL11 (143 aa).

It belongs to the universal ribosomal protein uL11 family. As to quaternary structure, part of the ribosomal stalk of the 50S ribosomal subunit. Interacts with L10 and the large rRNA to form the base of the stalk. L10 forms an elongated spine to which L12 dimers bind in a sequential fashion forming a multimeric L10(L12)X complex. One or more lysine residues are methylated.

Forms part of the ribosomal stalk which helps the ribosome interact with GTP-bound translation factors. The protein is Large ribosomal subunit protein uL11 of Janthinobacterium sp. (strain Marseille) (Minibacterium massiliensis).